The sequence spans 550 residues: Acetyl-coenzyme A transporter 1 (550 aa).

Basic and acidic residues-rich tracts occupy residues 1–12 (MSPTISHKDSSR) and 36–52 (DDSRRDSVGGEGDREVL). The interval 1-58 (MSPTISHKDSSRQRRSGMFSHALDMKSGPLPPGGWDDSRRDSVGGEGDREVLLGDAGP) is disordered. Residues 1–74 (MSPTISHKDS…PRSYRSELSS (74 aa)) lie on the Cytoplasmic side of the membrane. Serine 42 is subject to Phosphoserine. Residues 75–95 (ILLLLFLYVLQGIPLGLAGSI) form a helical membrane-spanning segment. The Extracellular portion of the chain corresponds to 96–113 (PLILQSKNVSYTDQAFFS). The N-linked (GlcNAc...) asparagine glycan is linked to asparagine 103. Residues 114-134 (FVFWPFSLKLLWAPLVDAVYF) form a helical membrane-spanning segment. The Cytoplasmic segment spans residues 135–141 (KNFGRRK). A helical transmembrane segment spans residues 142 to 162 (SWLVPTQYTLGIFMIYLSTQV). The Extracellular portion of the chain corresponds to 163-175 (DRLLGNIDGRTPD). Residues 176–196 (VVALTVTFFLFEFLAATQDIA) traverse the membrane as a helical segment. Residues 197–217 (VDGWALTMLSRENVGYASTCN) lie on the Cytoplasmic side of the membrane. Residues 218–238 (SVGQTAGYFLGNVLFLALESA) traverse the membrane as a helical segment. Over 239-256 (DFCNKYLRFQPQPRGIVT) the chain is Extracellular. Residues 257–277 (LSDFLFFWGTVFLITTTLVAL) form a helical membrane-spanning segment. Topologically, residues 278–300 (LKKENREASIVKEETQGITDTYK) are cytoplasmic. The helical transmembrane segment at 301–321 (LLFSIIKMPAVLAFCLLILTS) threads the bilayer. Topologically, residues 322 to 344 (KIGFSAADAVTGLKLVEEGVPKE) are extracellular. The chain crosses the membrane as a helical span at residues 345–365 (HLALLAVPMVPLQIILPLLIS). Over 366 to 375 (KYTAGPQPLN) the chain is Cytoplasmic. The chain crosses the membrane as a helical span at residues 376-396 (IFYKAMPYRLLLGLEYALLVW). The Extracellular portion of the chain corresponds to 397 to 405 (WTPKVEHQG). The chain crosses the membrane as a helical span at residues 406–426 (GFPLYYYIIVLLSYALHQVTL). The Cytoplasmic segment spans residues 427–509 (YSMYVSIMAF…LGGSCVTALD (83 aa)). Residues 510 to 530 (GYYVESIICVLIGFGWWFFLG) traverse the membrane as a helical segment. Residues 531 to 550 (PKFKKLQDEGPSSWKCKRNN) are Extracellular-facing.

This sequence belongs to the SLC33A transporter family. In terms of assembly, homodimerizes. Expressed in all adult tissues examined including brain, heart, kidney, liver and spleen, with maximum expression in liver and kidney.

The protein localises to the endoplasmic reticulum membrane. It carries out the reaction acetyl-CoA(in) = acetyl-CoA(out). Its function is as follows. Acetyl-CoA transporter that mediates active acetyl-CoA import through the endoplasmic reticulum (ER) membrane into the ER lumen where specific ER-based acetyl-CoA:lysine acetyltransferases are responsible for the acetylation of ER-based protein substrate, such as BACE1. Necessary for O-acetylation of gangliosides. This chain is Acetyl-coenzyme A transporter 1 (Slc33a1), found in Mus musculus (Mouse).